A 228-amino-acid chain; its full sequence is Ribosomal RNA small subunit methyltransferase G (228 aa).

S-adenosyl-L-methionine-binding positions include Gly70, Leu75, 120 to 121 (AE), and Arg138. The segment at 207 to 228 (RRGDTRGPNRRVSPRRTGGAPA) is disordered.

Belongs to the methyltransferase superfamily. RNA methyltransferase RsmG family.

The protein resides in the cytoplasm. In terms of biological role, specifically methylates the N7 position of guanine in position 518 of 16S rRNA. This Mycobacterium marinum (strain ATCC BAA-535 / M) protein is Ribosomal RNA small subunit methyltransferase G.